A 375-amino-acid chain; its full sequence is Nucleosome assembly protein 1-like 4 (375 aa).

The disordered stretch occupies residues 1 to 31 (MADHSFSDGVPSDSVEAAKNASNTEKLTDQV). An N-acetylalanine modification is found at alanine 2. A phosphoserine mark is found at serine 5, serine 7, and serine 12. The span at 20 to 31 (NASNTEKLTDQV) shows a compositional bias: polar residues. Threonine 51 bears the Phosphothreonine mark. Phosphoserine is present on residues serine 53 and serine 54. Residue threonine 58 is modified to Phosphothreonine. An N6-acetyllysine modification is found at lysine 105. Residues 116–137 (PTDAESEWHSENEEEEKLAGDM) form a disordered region. A compositionally biased stretch (basic and acidic residues) spans 121–137 (SEWHSENEEEEKLAGDM). Serine 125 is modified (phosphoserine). Lysine 146 carries the N6-acetyllysine modification. Residues 265-271 (IKKKQKH) carry the Nuclear localization signal motif. Position 304 is a phosphoserine (serine 304). The segment at 339–375 (AIEDDDNFEEGEEGEEEELEGDEEGEDEDDAEINPKV) is disordered.

It belongs to the nucleosome assembly protein (NAP) family. Interacts with core (H2A, CD2APH2B, H3, H4) and linker (H1) histones. In terms of assembly, (Microbial infection) Interacts with Chikungunya virus non-structural protein 3 (via C-terminus). Phosphorylated at the G0/G1 boundary but it is not phosphorylated in S-phase. Phosphorylated protein remains in the cytoplasm in a complex with histones during the G0/G1 transition, whereas dephosphorylation triggers its transport into the nucleus at the G1/S-boundary. In terms of processing, polyglutamylated by TTLL4, a modification that occurs exclusively on glutamate residues and results in polyglutamate chains on the gamma-carboxyl group. Some residues may also be monoglycylated but not polyglycylated due to the absence of functional TTLL10 in human. As to expression, ubiquitous. Biallelically expressed in fetal and adult tissues. Highest levels in testis.

Its subcellular location is the nucleus. The protein localises to the cytoplasm. Acts as a histone chaperone in nucleosome assembly. This chain is Nucleosome assembly protein 1-like 4, found in Homo sapiens (Human).